We begin with the raw amino-acid sequence, 315 residues long: Acetaldehyde dehydrogenase 2 (315 aa).

11 to 14 (SGNI) provides a ligand contact to NAD(+). The active-site Acyl-thioester intermediate is the Cys129. NAD(+)-binding positions include 160–168 (SAGPGTRSN) and Asn290.

Belongs to the acetaldehyde dehydrogenase family.

The catalysed reaction is acetaldehyde + NAD(+) + CoA = acetyl-CoA + NADH + H(+). The protein is Acetaldehyde dehydrogenase 2 of Mycobacterium sp. (strain KMS).